Reading from the N-terminus, the 497-residue chain is uncharacterized protein (497 aa).

Residues 474 to 497 (DPRNPFSNGKPSGWSDEDVAWLKR) form a disordered region. A compositionally biased stretch (acidic residues) spans 488–497 (SDEDVAWLKR).

This is an uncharacterized protein from Bacillus anthracis.